A 197-amino-acid chain; its full sequence is Putative RING-H2 finger protein ATL71 (197 aa).

Residues 20–40 (MGGLAYGIGVSIGILMLITTI) traverse the membrane as a helical segment. Residues 53–80 (SASPTTTPRTRRRQRESNGTLPPGQERF) form a disordered region. Residues 129-171 (CSICLADYKKMDMIRVLPDCNHLFHDNCVDPWLRLHPTCPVCR) form an RING-type; atypical zinc finger.

The protein belongs to the RING-type zinc finger family. ATL subfamily.

The protein localises to the membrane. It catalyses the reaction S-ubiquitinyl-[E2 ubiquitin-conjugating enzyme]-L-cysteine + [acceptor protein]-L-lysine = [E2 ubiquitin-conjugating enzyme]-L-cysteine + N(6)-ubiquitinyl-[acceptor protein]-L-lysine.. The protein operates within protein modification; protein ubiquitination. The sequence is that of Putative RING-H2 finger protein ATL71 (ATL71) from Arabidopsis thaliana (Mouse-ear cress).